Reading from the N-terminus, the 125-residue chain is Fluoride-specific ion channel FluC (125 aa).

2 helical membrane passes run 4–24 (LWVALGGALGALARYTVGVWI) and 34–54 (YGTFAINVTGCFLIGLALTVL). The Na(+) site is built by Gly74 and Thr77. Residues 99–119 (VLYFGSSLALGILAVWLGMVV) traverse the membrane as a helical segment.

This sequence belongs to the fluoride channel Fluc/FEX (TC 1.A.43) family.

The protein localises to the cell inner membrane. The enzyme catalyses fluoride(in) = fluoride(out). With respect to regulation, na(+) is not transported, but it plays an essential structural role and its presence is essential for fluoride channel function. In terms of biological role, fluoride-specific ion channel. Important for reducing fluoride concentration in the cell, thus reducing its toxicity. The sequence is that of Fluoride-specific ion channel FluC from Acidobacterium capsulatum (strain ATCC 51196 / DSM 11244 / BCRC 80197 / JCM 7670 / NBRC 15755 / NCIMB 13165 / 161).